The following is an 883-amino-acid chain: Alanine--tRNA ligase (883 aa).

His570, His574, Cys672, and His676 together coordinate Zn(2+).

Belongs to the class-II aminoacyl-tRNA synthetase family. Zn(2+) is required as a cofactor.

The protein localises to the cytoplasm. It catalyses the reaction tRNA(Ala) + L-alanine + ATP = L-alanyl-tRNA(Ala) + AMP + diphosphate. Its function is as follows. Catalyzes the attachment of alanine to tRNA(Ala) in a two-step reaction: alanine is first activated by ATP to form Ala-AMP and then transferred to the acceptor end of tRNA(Ala). Also edits incorrectly charged Ser-tRNA(Ala) and Gly-tRNA(Ala) via its editing domain. This chain is Alanine--tRNA ligase, found in Heliobacterium modesticaldum (strain ATCC 51547 / Ice1).